Reading from the N-terminus, the 162-residue chain is Probable chemoreceptor glutamine deamidase CheD (162 aa).

The protein belongs to the CheD family.

It catalyses the reaction L-glutaminyl-[protein] + H2O = L-glutamyl-[protein] + NH4(+). Probably deamidates glutamine residues to glutamate on methyl-accepting chemotaxis receptors (MCPs), playing an important role in chemotaxis. This is Probable chemoreceptor glutamine deamidase CheD from Clostridium botulinum (strain Alaska E43 / Type E3).